The primary structure comprises 1391 residues: DNA-directed RNA polymerase subunit beta (1391 aa).

The protein belongs to the RNA polymerase beta chain family. The RNAP catalytic core consists of 2 alpha, 1 beta, 1 beta' and 1 omega subunit. When a sigma factor is associated with the core the holoenzyme is formed, which can initiate transcription.

It carries out the reaction RNA(n) + a ribonucleoside 5'-triphosphate = RNA(n+1) + diphosphate. Functionally, DNA-dependent RNA polymerase catalyzes the transcription of DNA into RNA using the four ribonucleoside triphosphates as substrates. This Paramagnetospirillum magneticum (strain ATCC 700264 / AMB-1) (Magnetospirillum magneticum) protein is DNA-directed RNA polymerase subunit beta.